Consider the following 687-residue polypeptide: Fimbrin-5 (687 aa).

Positions 7–74 (VLVSDPWLQS…KSVLDKSYPN (68 aa)) constitute an EF-hand domain. 4 consecutive Calponin-homology (CH) domains span residues 122-239 (ESEK…KIQM), 267-370 (LAPE…QHRN), 392-498 (SREE…RYTM), and 513-621 (EITD…YWSL). Actin-binding regions lie at residues 122-370 (ESEK…QHRN) and 392-621 (SREE…YWSL). The disordered stretch occupies residues 628 to 687 (ESTVSEDATDDGDANSVAGEISNLSIDGASESSPTVQDQELLTKADNDEDEVDGENNKDA). A compositionally biased stretch (polar residues) spans 649–667 (SNLSIDGASESSPTVQDQE).

As to quaternary structure, interacts with F-actin. Expressed in mature pollen.

It localises to the cytoplasm. Its subcellular location is the cytoskeleton. In terms of biological role, cross-links actin filaments (F-actin) in a calcium independent manner. Induces the formation of actin bundles. Stabilizes and prevents F-actin depolymerization mediated by latrunculin B (LatB). In Arabidopsis thaliana (Mouse-ear cress), this protein is Fimbrin-5.